A 93-amino-acid chain; its full sequence is Protein LSO1 (93 aa).

The segment at 1–73 (MHNTGKRYSE…TEKLRAKKER (73 aa)) is disordered. The stretch at 20-83 (ARKRRQAYEK…DQLLAAEEEA (64 aa)) forms a coiled coil. Composition is skewed to basic and acidic residues over residues 25 to 49 (QAYE…EEGA) and 57 to 73 (LIME…KKER).

Its subcellular location is the nucleus. The protein resides in the cytoplasm. Functionally, likely to play a role in iron homeostasis. In Saccharomyces cerevisiae (strain ATCC 204508 / S288c) (Baker's yeast), this protein is Protein LSO1.